The chain runs to 156 residues: Phospholipase A2 A2-hormotoxin-Apt1a (156 aa).

Residues M1–A19 form the signal peptide. Residues D20–A35 constitute a propeptide that is removed on maturation. Disulfide bonds link C62–C156, C64–C80, C79–C138, C86–C131, and C115–C129. Ca(2+) is bound by residues G65 and G67. The active site involves H83. Residue D84 participates in Ca(2+) binding. The active site involves D132.

Belongs to the phospholipase A2 family. Ca(2+) is required as a cofactor.

It localises to the secreted. It is found in the nematocyst. The catalysed reaction is a 1,2-diacyl-sn-glycero-3-phosphocholine + H2O = a 1-acyl-sn-glycero-3-phosphocholine + a fatty acid + H(+). Sea anemone phospholipase A2 (PLA2) that may have a role both in defense and in digestion, since its expression and enzymatic activity were found both in the acontia (defensive organs) and tentacles. PLA2 catalyzes the calcium-dependent hydrolysis of the 2-acyl groups in 3-sn-phosphoglycerides. The sequence is that of Phospholipase A2 A2-hormotoxin-Apt1a from Adamsia palliata (Cloak anemone).